The primary structure comprises 244 residues: Glucosamine-6-phosphate deaminase (244 aa).

Residue Asp67 is the Proton acceptor; for enolization step of the active site. Asn136 acts as the For ring-opening step in catalysis. The active-site Proton acceptor; for ring-opening step is His138. The active-site For ring-opening step is the Glu143.

It belongs to the glucosamine/galactosamine-6-phosphate isomerase family. NagB subfamily.

It catalyses the reaction alpha-D-glucosamine 6-phosphate + H2O = beta-D-fructose 6-phosphate + NH4(+). It participates in amino-sugar metabolism; N-acetylneuraminate degradation; D-fructose 6-phosphate from N-acetylneuraminate: step 5/5. In terms of biological role, catalyzes the reversible isomerization-deamination of glucosamine 6-phosphate (GlcN6P) to form fructose 6-phosphate (Fru6P) and ammonium ion. In Clostridium botulinum (strain Okra / Type B1), this protein is Glucosamine-6-phosphate deaminase.